A 677-amino-acid chain; its full sequence is UvrABC system protein B (677 aa).

The region spanning Asp26–Val414 is the Helicase ATP-binding domain. An ATP-binding site is contributed by Gly39 to Thr46. A Beta-hairpin motif is present at residues Tyr92–Ile115. In terms of domain architecture, Helicase C-terminal spans Gln432–Met598. Positions Met637–Gln672 constitute a UVR domain.

This sequence belongs to the UvrB family. Forms a heterotetramer with UvrA during the search for lesions. Interacts with UvrC in an incision complex.

The protein resides in the cytoplasm. Its function is as follows. The UvrABC repair system catalyzes the recognition and processing of DNA lesions. A damage recognition complex composed of 2 UvrA and 2 UvrB subunits scans DNA for abnormalities. Upon binding of the UvrA(2)B(2) complex to a putative damaged site, the DNA wraps around one UvrB monomer. DNA wrap is dependent on ATP binding by UvrB and probably causes local melting of the DNA helix, facilitating insertion of UvrB beta-hairpin between the DNA strands. Then UvrB probes one DNA strand for the presence of a lesion. If a lesion is found the UvrA subunits dissociate and the UvrB-DNA preincision complex is formed. This complex is subsequently bound by UvrC and the second UvrB is released. If no lesion is found, the DNA wraps around the other UvrB subunit that will check the other stand for damage. This is UvrABC system protein B from Idiomarina loihiensis (strain ATCC BAA-735 / DSM 15497 / L2-TR).